The following is a 388-amino-acid chain: 1-deoxy-D-xylulose 5-phosphate reductoisomerase (388 aa).

6 residues coordinate NADPH: threonine 10, glycine 11, serine 12, isoleucine 13, asparagine 37, and asparagine 121. 1-deoxy-D-xylulose 5-phosphate is bound at residue lysine 122. Glutamate 123 contacts NADPH. Mn(2+) is bound at residue aspartate 147. 4 residues coordinate 1-deoxy-D-xylulose 5-phosphate: serine 148, glutamate 149, serine 173, and histidine 196. Glutamate 149 contributes to the Mn(2+) binding site. Residue glycine 202 coordinates NADPH. 1-deoxy-D-xylulose 5-phosphate is bound by residues serine 209, asparagine 214, lysine 215, and glutamate 218. Glutamate 218 serves as a coordination point for Mn(2+).

This sequence belongs to the DXR family. Mg(2+) is required as a cofactor. It depends on Mn(2+) as a cofactor.

The enzyme catalyses 2-C-methyl-D-erythritol 4-phosphate + NADP(+) = 1-deoxy-D-xylulose 5-phosphate + NADPH + H(+). The protein operates within isoprenoid biosynthesis; isopentenyl diphosphate biosynthesis via DXP pathway; isopentenyl diphosphate from 1-deoxy-D-xylulose 5-phosphate: step 1/6. Its function is as follows. Catalyzes the NADPH-dependent rearrangement and reduction of 1-deoxy-D-xylulose-5-phosphate (DXP) to 2-C-methyl-D-erythritol 4-phosphate (MEP). The protein is 1-deoxy-D-xylulose 5-phosphate reductoisomerase of Lachnoclostridium phytofermentans (strain ATCC 700394 / DSM 18823 / ISDg) (Clostridium phytofermentans).